Reading from the N-terminus, the 126-residue chain is Alpha-lactalbumin (126 aa).

One can recognise a C-type lysozyme domain in the interval 1–126; the sequence is RIFQICELSR…CNSDLDQWKC (126 aa). Intrachain disulfides connect cysteine 6–cysteine 126, cysteine 30–cysteine 117, cysteine 63–cysteine 82, and cysteine 78–cysteine 96. An N-linked (GlcNAc...) asparagine glycan is attached at asparagine 47. The Ca(2+) site is built by lysine 84, aspartate 87, aspartate 89, aspartate 92, and aspartate 93.

This sequence belongs to the glycosyl hydrolase 22 family. In terms of assembly, lactose synthase (LS) is a heterodimer of a catalytic component, beta1,4-galactosyltransferase (beta4Gal-T1) and a regulatory component, alpha-lactalbumin (LA). Mammary gland specific. Secreted in milk.

Its subcellular location is the secreted. Its function is as follows. Regulatory subunit of lactose synthase, changes the substrate specificity of galactosyltransferase in the mammary gland making glucose a good acceptor substrate for this enzyme. This enables LS to synthesize lactose, the major carbohydrate component of milk. In other tissues, galactosyltransferase transfers galactose onto the N-acetylglucosamine of the oligosaccharide chains in glycoproteins. The polypeptide is Alpha-lactalbumin (LALBA) (Ornithorhynchus anatinus (Duckbill platypus)).